Consider the following 496-residue polypeptide: Glycogen synthase (496 aa).

ADP-alpha-D-glucose is bound at residue lysine 15.

The protein belongs to the glycosyltransferase 1 family. Bacterial/plant glycogen synthase subfamily.

It carries out the reaction [(1-&gt;4)-alpha-D-glucosyl](n) + ADP-alpha-D-glucose = [(1-&gt;4)-alpha-D-glucosyl](n+1) + ADP + H(+). It participates in glycan biosynthesis; glycogen biosynthesis. In terms of biological role, synthesizes alpha-1,4-glucan chains using ADP-glucose. The chain is Glycogen synthase from Natranaerobius thermophilus (strain ATCC BAA-1301 / DSM 18059 / JW/NM-WN-LF).